Here is a 122-residue protein sequence, read N- to C-terminus: Double-headed protease inhibitor, submandibular gland (122 aa).

2 consecutive Kazal-like domains span residues Gly10–Ile70 and Glu71–Ser121. 6 disulfide bridges follow: Cys16-Cys50, Cys28-Cys47, Cys36-Cys68, Cys72-Cys101, Cys79-Cys98, and Cys87-Cys119.

It is found in the secreted. Its function is as follows. This inhibitor is composed of two homologous actively inhibiting halves: one which inhibits trypsin, the other which inhibits elastase. This is Double-headed protease inhibitor, submandibular gland from Panthera uncia (Snow leopard).